The primary structure comprises 409 residues: MLGAVKMEGHEHAADWSTYYGEPECYTSVSNMNTGLGMNSMNTYMTMSGMSSTANMTAANTMNMSYVNTGMSPSMTGMSPGTGAMAGMGAGMTGMSAALSPTMSPMAAQAPSMNALTSYSNMNAMSPMYGQSNINRSRDPKTYRRSYTHAKPPYSYISLITMAIQQSPSKMLTLSEIYQWIMDLFPFYRQNQQRWQNSIRHSLSFNDCFLKVPRSPDKPGKGSFWTLHPDSGNMFENGCYLRRQKRFKCDKKLSKDPSRKTSEGGSNSSSESCNGNESPHSNSSSNELKRSLSDMKSGQGLSPDHAASPTSQAQHLLAQHHSVLAHEGHLKPEHHYSFNHPFSINNLMSSEQQHHKMDLKTYEQVMHYGYGSPMAGTLSMGSMASKAGLDSPDTSYYQGVYSRPILNSS.

A DNA-binding region (fork-head) is located at residues 150–241; that stretch reads AKPPYSYISL…GNMFENGCYL (92 aa). The segment covering 250 to 262 has biased composition (basic and acidic residues); that stretch reads DKKLSKDPSRKTS. Residues 250-315 are disordered; it reads DKKLSKDPSR…AASPTSQAQH (66 aa). Positions 263 to 286 are enriched in low complexity; sequence EGGSNSSSESCNGNESPHSNSSSN.

It localises to the nucleus. Functionally, may play a crucial role in specification of both the axial mesendoderm and the ventral nervous system. The sequence is that of Forkhead box protein A2 (foxa2) from Danio rerio (Zebrafish).